Consider the following 179-residue polypeptide: Caveolin-1 (179 aa).

Residue Ser2 is modified to N-acetylserine. The residue at position 2 (Ser2) is a Phosphoserine. The interval 2-95 (SGGKYVDSEG…WKASFTTFTV (94 aa)) is required for homooligomerization. Over 2-105 (SGGKYVDSEG…TKYWFYRLLS (104 aa)) the chain is Cytoplasmic. Lys5 carries the N6-acetyllysine; alternate modification. Residue Lys5 forms a Glycyl lysine isopeptide (Lys-Gly) (interchain with G-Cter in ubiquitin); alternate linkage. A Phosphotyrosine modification is found at Tyr6. Ser9 bears the Phosphoserine mark. Position 14 is a phosphotyrosine; by ABL1 (Tyr14). Tyr25 is modified (phosphotyrosine). Glycyl lysine isopeptide (Lys-Gly) (interchain with G-Cter in ubiquitin) cross-links involve residues Lys26 and Lys30. The residue at position 37 (Ser37) is a Phosphoserine. Glycyl lysine isopeptide (Lys-Gly) (interchain with G-Cter in ubiquitin) cross-links involve residues Lys39, Lys48, and Lys58. The interaction with CAVIN3 stretch occupies residues 83-95 (DGIWKASFTTFTV). Positions 106-126 (ALFGIPMALIWGIYFAILSFL) form an intramembrane region, helical. Topologically, residues 127 to 179 (HIWAVVPCIKSFLIEIQCISRVYSIYVHTFCDPLFEAIGKVFSNIRINMQKEI) are cytoplasmic. The interval 132 to 143 (VPCIKSFLIEIQ) is interacts with SPRY1, SPRY2, SPRY3 and SPRY4. 3 S-palmitoyl cysteine lipidation sites follow: Cys134, Cys144, and Cys157. An interacts with SPRY1, SPRY2, and SPRY4 region spans residues 150–161 (SIYVHTFCDPLF). The interval 168–179 (FSNIRINMQKEI) is interacts with SPRY1, SPRY2, SPRY3 and SPRY4.

Belongs to the caveolin family. Homooligomer. Interacts with GLIPR2. Interacts with NOSTRIN. Interacts with SNAP25 and STX1A. Interacts (via the N-terminus) with DPP4; the interaction is direct. Interacts with CTNNB1, CDH1 and JUP. Interacts with PACSIN2; this interaction induces membrane tubulation. Interacts with SLC7A9. Interacts with BMX and BTK. Interacts with TGFBR1. Interacts with CAVIN3 (via leucine-zipper domain) in a cholesterol-sensitive manner. Interacts with CAVIN1. Interacts with EHD2 in a cholesterol-dependent manner. Forms a ternary complex with UBXN6 and VCP; mediates CAV1 targeting to lysosomes for degradation. Interacts with ABCG1; this interaction regulates ABCG1-mediated cholesterol efflux. Interacts with NEU3; this interaction enhances NEU3 sialidase activity within caveola. Interacts (via C-terminus) with SPRY1, SPRY2 (via C-terminus), SPRY3, and SPRY4. Interacts with IGFBP5; this interaction allows trafficking of IGFBP5 from the plasma membrane to the nucleus. Phosphorylated at Tyr-14 by ABL1 in response to oxidative stress. Post-translationally, ubiquitinated. Undergo monoubiquitination and multi- and/or polyubiquitination. Monoubiquitination of N-terminal lysines promotes integration in a ternary complex with UBXN6 and VCP which promotes oligomeric CAV1 targeting to lysosomes for degradation. Ubiquitinated by ZNRF1; leading to degradation and modulation of the TLR4-mediated immune response.

Its subcellular location is the golgi apparatus membrane. The protein resides in the cell membrane. The protein localises to the membrane. It localises to the caveola. It is found in the membrane raft. In terms of biological role, may act as a scaffolding protein within caveolar membranes. Forms a stable heterooligomeric complex with CAV2 that targets to lipid rafts and drives caveolae formation. Mediates the recruitment of CAVIN proteins (CAVIN1/2/3/4) to the caveolae. Interacts directly with G-protein alpha subunits and can functionally regulate their activity. Involved in the costimulatory signal essential for T-cell receptor (TCR)-mediated T-cell activation. Its binding to DPP4 induces T-cell proliferation and NF-kappa-B activation in a T-cell receptor/CD3-dependent manner. Recruits CTNNB1 to caveolar membranes and may regulate CTNNB1-mediated signaling through the Wnt pathway. Negatively regulates TGFB1-mediated activation of SMAD2/3 by mediating the internalization of TGFBR1 from membrane rafts leading to its subsequent degradation. Binds 20(S)-hydroxycholesterol (20(S)-OHC). The polypeptide is Caveolin-1 (CAV1) (Eulemur macaco macaco (Black lemur)).